A 384-amino-acid chain; its full sequence is Interstitial collagenase (384 aa).

The first 25 residues, 1–25, serve as a signal peptide directing secretion; that stretch reads MLSGLWSSILALLGVFLQSVGEFRA. A propeptide spans 26–88 (activation peptide); the sequence is ETQEQDVEIV…STCGVPDVGE (63 aa). A Cysteine switch motif is present at residues 79–86; sequence STCGVPDV. Zn(2+) is bound at residue C81. Residues D113 and D129 each coordinate Ca(2+). Positions 139 and 141 each coordinate Zn(2+). Residues D146, G147, G149, and N151 each coordinate Ca(2+). Residue H154 participates in Zn(2+) binding. 3 residues coordinate Ca(2+): G161, G163, and D165. H167 lines the Zn(2+) pocket. Ca(2+)-binding residues include D169, E170, and E172. Zn(2+) is bound at residue H189. Residue E190 is part of the active site. Zn(2+)-binding residues include H193 and H199. A disordered region spans residues 218–239; that stretch reads LSQDDIDGPSGNPVQPRGPQTP. A disulfide bridge connects residues C242 and C381. 3 residues coordinate Ca(2+): D249, Q277, and D347. Hemopexin repeat units follow at residues 273 to 319 and 333 to 381; these read ELGL…FGFP and KQSM…WFNC.

The protein belongs to the peptidase M10A family. It depends on Ca(2+) as a cofactor. Zn(2+) serves as cofactor.

The protein localises to the secreted. It localises to the extracellular space. The protein resides in the extracellular matrix. It catalyses the reaction Cleavage of the triple helix of collagen at about three-quarters of the length of the molecule from the N-terminus, at 775-Gly-|-Ile-776 in the alpha1(I) chain. Cleaves synthetic substrates and alpha-macroglobulins at bonds where P1' is a hydrophobic residue.. With respect to regulation, can be activated without removal of the activation peptide. Its function is as follows. Cleaves collagens of types I, II, and III at one site in the helical domain. Also cleaves collagens of types VII and X. This Aquarana catesbeiana (American bullfrog) protein is Interstitial collagenase.